The primary structure comprises 966 residues: Mitogen-activated protein kinase kinase kinase 13 (966 aa).

Disordered regions lie at residues 1–22 and 93–112; these read MANFQEHLSCSSSPHLPFSESK and SEMAVSQGNSNTVDAESTSG. The segment covering 96 to 112 has biased composition (polar residues); that stretch reads AVSQGNSNTVDAESTSG. Residues 168 to 409 form the Protein kinase domain; it reads ISELQWLGSG…FRQTLMHLDI (242 aa). ATP-binding positions include 174 to 182 and lysine 195; that span reads LGSGAQGAV. Aspartate 279 (proton acceptor) is an active-site residue. Leucine-zipper stretches follow at residues 433–454 and 486–507; these read VKKHFEKIKSEGTCIHRLDEEL and LSAIMLQLEMREKELVKREQAV. 4 disordered regions span residues 534-652, 744-834, 846-873, and 887-906; these read KRKG…SQSH, DIPS…RRQR, STFSSENFSVSDGEEGNTSDHSNSPDEL, and DLLSQTPEIPIDISSHSDGL. Positions 567 to 581 are enriched in low complexity; the sequence is SPLSGSPKMSTSSSK. The segment covering 582-594 has biased composition (basic residues); it reads SRYRSKPRHRRGN. Composition is skewed to polar residues over residues 609–629 and 781–795; these read QPAQENSPNPTYLHQAQSQYP and FSSCRSESSLGTSHL. Positions 814 to 827 are enriched in acidic residues; sequence DSSEEEEGEVDSEV. Residues 815 to 828 are acidic; that stretch reads SSEEEEGEVDSEVE. The segment covering 846 to 855 has biased composition (polar residues); the sequence is STFSSENFSV.

The protein belongs to the protein kinase superfamily. STE Ser/Thr protein kinase family. MAP kinase kinase kinase subfamily. In terms of assembly, homodimer; forms dimers through the leucine-zipper motif. Interacts with the C-terminus of MAPK8IP1 through the kinase catalytic domain. Binds PRDX3. Associates with the IKK complex through the kinase domain. The cofactor is Mg(2+). Autophosphorylated on serine and threonine residues.

The protein resides in the cytoplasm. Its subcellular location is the membrane. The catalysed reaction is L-seryl-[protein] + ATP = O-phospho-L-seryl-[protein] + ADP + H(+). It carries out the reaction L-threonyl-[protein] + ATP = O-phospho-L-threonyl-[protein] + ADP + H(+). Its activity is regulated as follows. Activated by autophosphorylation and homodimerization. Activates the JUN N-terminal pathway through activation of the MAP kinase kinase MAP2K7. Acts synergistically with PRDX3 to regulate the activation of NF-kappa-B in the cytosol. This activation is kinase-dependent and involves activating the IKK complex, the IKBKB-containing complex that phosphorylates inhibitors of NF-kappa-B. The chain is Mitogen-activated protein kinase kinase kinase 13 from Pongo abelii (Sumatran orangutan).